We begin with the raw amino-acid sequence, 335 residues long: SLAM family member 7 (335 aa).

The first 22 residues, 1–22 (MAGSPTCLTLIYILWQLTGSAA), serve as a signal peptide directing secretion. One can recognise an Ig-like V-type domain in the interval 23–124 (SGPVKELVGS…PSTQEYVLHV (102 aa)). Residues 23-226 (SGPVKELVGS…GAADDPDSSM (204 aa)) lie on the Extracellular side of the membrane. 6 N-linked (GlcNAc...) asparagine glycosylation sites follow: asparagine 98, asparagine 142, asparagine 148, asparagine 172, asparagine 176, and asparagine 204. In terms of domain architecture, Ig-like C2-type spans 131–206 (PKVTMGLQSN…ARNPVSRNFS (76 aa)). 2 disulfide bridges follow: cysteine 145–cysteine 215 and cysteine 151–cysteine 195. Residues 227–247 (VLLCLLLVPLLLSLFVLGLFL) form a helical membrane-spanning segment. Topologically, residues 248–335 (WFLKRERQEE…PRLFAYENVI (88 aa)) are cytoplasmic. An interaction with FYN when phosphorylated at Tyr-284 region spans residues 278 to 296 (SGENTEYDTIPHTNRTILK). The ITSM motif lies at 302 to 307 (TVYSTV).

In terms of assembly, isoform 1 binds to SH2D1A when its cytoplasmic tail is phosphorylated in the presence of FYN (in vitro); low affinity binding, the physiological relevance of the interaction is questioned. Interacts with SH2D1B; in NK cells. Interacts (via ITSM phosphorylated on Tyr-302) with SH2D1B, PTPN6/SHP-1, PTPN11/SHP-2, INPP5D/SHIP1, CSK and FYN. As to expression, expressed in spleen, lymph node, peripheral blood leukocytes, bone marrow, small intestine, stomach, appendix, lung and trachea. Expression was detected in NK cells, activated B-cells, NK-cell line but not in promyelocytic, B-, or T-cell lines. Expressed in monocytes. Isoform 3 is expressed at much lower level than isoform 1.

The protein resides in the membrane. In terms of biological role, self-ligand receptor of the signaling lymphocytic activation molecule (SLAM) family. SLAM receptors triggered by homo- or heterotypic cell-cell interactions are modulating the activation and differentiation of a wide variety of immune cells and thus are involved in the regulation and interconnection of both innate and adaptive immune response. Activities are controlled by presence or absence of small cytoplasmic adapter proteins, SH2D1A/SAP and/or SH2D1B/EAT-2. Isoform 1 mediates NK cell activation through a SH2D1A-independent extracellular signal-regulated ERK-mediated pathway. Positively regulates NK cell functions by a mechanism dependent on phosphorylated SH2D1B. Downstream signaling implicates PLCG1, PLCG2 and PI3K. In addition to heterotypic NK cells-target cells interactions also homotypic interactions between NK cells may contribute to activation. However, in the absence of SH2D1B, inhibits NK cell function. Also acts inhibitory in T-cells. May play a role in lymphocyte adhesion. In LPS-activated monocytes negatively regulates production of pro-inflammatory cytokines. Isoform 3 does not mediate any NK cell activation. This chain is SLAM family member 7 (SLAMF7), found in Homo sapiens (Human).